Consider the following 510-residue polypeptide: Outer spore wall protein 7 (510 aa).

A signal peptide spans 1 to 23 (MKAVFKVTTALLACVFIARYLVC). The disordered stretch occupies residues 167–195 (FETDSETEDYEDDENENEDEDEDEDEDDV). The segment covering 169 to 195 (TDSETEDYEDDENENEDEDEDEDEDDV) has biased composition (acidic residues). Tyr354 carries the post-translational modification Phosphotyrosine.

Belongs to the OSW/SHE family.

Functionally, involved in spore wall assembly. The sequence is that of Outer spore wall protein 7 from Saccharomyces cerevisiae (strain ATCC 204508 / S288c) (Baker's yeast).